The primary structure comprises 145 residues: Large ribosomal subunit protein uL13 (145 aa).

It belongs to the universal ribosomal protein uL13 family. Part of the 50S ribosomal subunit. Binds to Obg (AC P20964).

Functionally, this protein is one of the early assembly proteins of the 50S ribosomal subunit, although it is not seen to bind rRNA by itself. It is important during the early stages of 50S assembly. In Bacillus subtilis (strain 168), this protein is Large ribosomal subunit protein uL13.